The chain runs to 179 residues: MLNVSGLFVLLCGLLVSSSAQEVLAGVSSQLLNDLTQGLLRADFLPSLQTTGLQKPLSSAFDGVSGLLDIFGPPLTNEINTVSIQVKNPQLLHVSIESTPQRKEATVQVPFTSELIVQLLTMKPFTANMQSDIKVQIRLEKNVGGRYELAFGNCRLLPEAIWIQTGVQLAPAQNLLWQT.

An N-terminal signal peptide occupies residues 1 to 20; it reads MLNVSGLFVLLCGLLVSSSA.

The protein belongs to the BPI/LBP/Plunc superfamily. Plunc family. As to expression, expressed in breast cancer and salivary gland.

It is found in the secreted. Major protein in sweat, has surfactant properties. In Homo sapiens (Human), this protein is Putative BPIFA4P protein (BPIFA4P).